The following is a 194-amino-acid chain: NAD(P)H-quinone oxidoreductase subunit I (194 aa).

4Fe-4S ferredoxin-type domains follow at residues 55–84 (GRIHYEFDKCIACEVCVRVCPINLPVVDWE) and 95–124 (NHYSIDFGVCIFCGNCVEYCPTNCLSMTEE). Positions 64, 67, 70, 74, 104, 107, 110, and 114 each coordinate [4Fe-4S] cluster. The segment at 173–194 (DLPANAPRPGARPEDLVEKTEA) is disordered. Positions 183–194 (ARPEDLVEKTEA) are enriched in basic and acidic residues.

It belongs to the complex I 23 kDa subunit family. As to quaternary structure, NDH-1 is composed of at least 11 different subunits. The cofactor is [4Fe-4S] cluster.

It is found in the cellular thylakoid membrane. The enzyme catalyses a plastoquinone + NADH + (n+1) H(+)(in) = a plastoquinol + NAD(+) + n H(+)(out). The catalysed reaction is a plastoquinone + NADPH + (n+1) H(+)(in) = a plastoquinol + NADP(+) + n H(+)(out). In terms of biological role, NDH-1 shuttles electrons from an unknown electron donor, via FMN and iron-sulfur (Fe-S) centers, to quinones in the respiratory and/or the photosynthetic chain. The immediate electron acceptor for the enzyme in this species is believed to be plastoquinone. Couples the redox reaction to proton translocation, and thus conserves the redox energy in a proton gradient. This chain is NAD(P)H-quinone oxidoreductase subunit I, found in Nostoc sp. (strain PCC 7120 / SAG 25.82 / UTEX 2576).